The chain runs to 347 residues: MASLLCLFFSLLGLAAIGAVKNCHPQCRCEVETFGLFDSFSLTKVDCSRIGPGNTPVPIPLDTSHLDLSLNSTTSISDTMLSGPGYTTLVSLDLSSNLIAQISPKAFSKLRYLETLDLSSNALEGLSDGCFTGLPLVELDLSENQFKEFNLDLFTTRTQDLPIMVDLSRNLLTSIFRRTPGHPLYIKSLMLAGNQLKTVPKLNGIPLQYLNLDGNLISSIDTGAFDSLTELVHLSLSGLSELTLIHPGAFRSLKNLQALDLSNNSQLKTLNPNVFSGLVSLQELNLSNTAVTPLSRTVFMQMPNIKSITLGPNVHCWKTHMQGQFHRQIGQAKPNDILTCDNAGLIL.

The N-terminal stretch at 1-19 is a signal peptide; the sequence is MASLLCLFFSLLGLAAIGA. The LRRNT domain occupies 20-61; the sequence is VKNCHPQCRCEVETFGLFDSFSLTKVDCSRIGPGNTPVPIPL. LRR repeat units lie at residues 62-83, 88-109, 112-133, 135-156, 160-175, 185-205, 206-227, 230-252, 255-277, and 280-301; these read DTSH…MLSG, TLVS…AFSK, YLET…CFTG, PLVE…LFTT, DLPI…LTSI, YIKS…LNGI, PLQY…AFDS, ELVH…AFRS, NLQA…VFSG, and SLQE…VFMQ. N-linked (GlcNAc...) asparagine glycosylation is present at Asn-285.

As to quaternary structure, forms a ternary complex with chordin/CHRD and BMP4.

It localises to the secreted. In terms of biological role, contributes to various developmental events through its interactions with multiple signaling pathways. Dorsalizing factor which functions as an inhibitor of bone morphogenetic proteins during gastrulation. The sequence is that of Tsukushi (tsku) from Danio rerio (Zebrafish).